A 90-amino-acid chain; its full sequence is Small ribosomal subunit protein uS15c (90 aa).

Belongs to the universal ribosomal protein uS15 family. In terms of assembly, part of the 30S ribosomal subunit.

It localises to the plastid. It is found in the chloroplast. This chain is Small ribosomal subunit protein uS15c (rps15), found in Panax ginseng (Korean ginseng).